Reading from the N-terminus, the 180-residue chain is Small ribosomal subunit protein bS16 (180 aa).

The protein belongs to the bacterial ribosomal protein bS16 family.

This chain is Small ribosomal subunit protein bS16, found in Flavobacterium psychrophilum (strain ATCC 49511 / DSM 21280 / CIP 103535 / JIP02/86).